A 2261-amino-acid chain; its full sequence is Phospholipid-transporting ATPase ABCA1 (2261 aa).

A lipid anchor (S-palmitoyl cysteine) is attached at Cys-3. Asn-14 is a glycosylation site (N-linked (GlcNAc...) asparagine). The chain crosses the membrane as a helical span at residues 22-42 (TCQLLLEVAWPLFIFLILISV). The S-palmitoyl cysteine moiety is linked to residue Cys-23. The Extracellular segment spans residues 43-639 (RLSYPPYEQH…DIFLRVMSRS (597 aa)). The interval 69-80 (WVQGIICNANNP) is annulus domain 1. Residues Cys-75 and Cys-309 are joined by a disulfide bond. Residues Asn-98, Asn-151, Asn-161, Asn-196, Asn-244, Asn-292, Asn-337, and Asn-349 are each glycosylated (N-linked (GlcNAc...) asparagine). Positions 368-379 (SRIIWKALKPLL) are annulus domain 2. 4 N-linked (GlcNAc...) asparagine glycosylation sites follow: Asn-400, Asn-478, Asn-489, and Asn-521. The tract at residues 564–594 (ERTNKIKDGYWDPGPRADPFEDMRYVWGGFA) is gateway domain. Transmembrane regions (helical) follow at residues 640 to 660 (MPLFMTLAWIYSVAVIIKSIV), 683 to 703 (FSWFVSSLIPLLVSAGLLVVI), 716 to 736 (SVVFVFLSVFAMVTILQCFLI), 745 to 765 (LAAACGGIIYFTLYLPYVLCV), and 777 to 797 (IFASLLSPVAFGFGCEYFALF). Residue Asn-820 is glycosylated (N-linked (GlcNAc...) asparagine). A helical membrane pass occupies residues 827–847 (MMLFDTFLYGVMTWYIEAVFP). Residues 899–1131 (VSIQNLVKVY…LGTGYYLTLV (233 aa)) enclose the ABC transporter 1 domain. ATP is bound at residue 933–940 (GHNGAGKT). A helical transmembrane segment spans residues 941–961 (TTMSILTGLFPPTSGTAYILG). Position 1042 is a phosphoserine; by PKA (Ser-1042). S-palmitoyl cysteine attachment occurs at residues Cys-1110 and Cys-1111. 2 N-linked (GlcNAc...) asparagine glycosylation sites follow: Asn-1144 and Asn-1294. The segment at 1285–1310 (FTEDDAVDPNDSDIDPESRETDLLSG) is disordered. Over residues 1287-1299 (EDDAVDPNDSDID) the composition is skewed to acidic residues. Position 1296 is a phosphoserine (Ser-1296). Residues 1351 to 1371 (IVLPAVFVCIALVFSLIVPPF) traverse the membrane as a helical segment. At 1372 to 1656 (GKYPSLELQP…ALMTTSVDVL (285 aa)) the chain is on the extracellular side. Residue Asn-1453 is glycosylated (N-linked (GlcNAc...) asparagine). A disulfide bond links Cys-1463 and Cys-1477. N-linked (GlcNAc...) asparagine glycosylation is found at Asn-1499, Asn-1504, and Asn-1637. 6 helical membrane passes run 1657–1677 (VSICVIFAMSFVPASFVVFLI), 1703–1723 (FVWDMCNYVVPATLVIIIFIC), 1735–1755 (LPVLALLLLLYGWSITPLMYP), 1768–1788 (VVLTSVNLFIGINGSVATFVL), 1802–1822 (ILKSVFLIFPHFCLGRGLIDM), and 1852–1872 (NLFAMAVEGVVFFLITVLIQY). In terms of domain architecture, ABC transporter 2 spans 1912-2144 (LEIKELTKIY…FGDGYTIVVR (233 aa)). 1946–1953 (GVNGAGKS) provides a ligand contact to ATP. The N-linked (GlcNAc...) asparagine glycan is linked to Asn-2044. Ser-2054 is subject to Phosphoserine; by PKA. Asn-2238 carries N-linked (GlcNAc...) asparagine glycosylation.

The protein belongs to the ABC transporter superfamily. ABCA family. In terms of assembly, interacts with MEGF10. May interact with APOE1; functionally associated with APOE1 in the biogenesis of HDLs. Interacts with ABCA8; this interaction potentiates cholesterol efflux. Interacts with ABCA12 and NR1H2; this interaction is required for ABCA1 localization to the cell surface and is necessary for its normal activity and stability. Phosphorylation on Ser-2054 regulates phospholipid efflux. In terms of processing, palmitoylated by ZDHHC8. Palmitoylation is essential for localization to the plasma membrane. In terms of tissue distribution, widely expressed in adult tissues. Highest levels are found in pregnant uterus and uterus.

Its subcellular location is the cell membrane. It is found in the endosome. It catalyses the reaction ATP + H2O + phospholipidSide 1 = ADP + phosphate + phospholipidSide 2.. It carries out the reaction a 1,2-diacyl-sn-glycero-3-phosphocholine(out) + ATP + H2O = a 1,2-diacyl-sn-glycero-3-phosphocholine(in) + ADP + phosphate + H(+). The catalysed reaction is a 1,2-diacyl-sn-glycero-3-phospho-L-serine(out) + ATP + H2O = a 1,2-diacyl-sn-glycero-3-phospho-L-serine(in) + ADP + phosphate + H(+). The enzyme catalyses a sphingomyelin(in) + ATP + H2O = a sphingomyelin(out) + ADP + phosphate + H(+). It catalyses the reaction cholesterol(in) + ATP + H2O = cholesterol(out) + ADP + phosphate + H(+). With respect to regulation, ATPase activity is decreased by cholesterol and ceramide. ATPase activity is stimulated by phosphatidylcholine and to a lesser degree by phosphatidylserine and sphingomyelin. Phospholipid translocase activity is highly reduced by berylium fluoride and aluminum flouride and reduced by N-ethylmaleimide. Catalyzes the translocation of specific phospholipids from the cytoplasmic to the extracellular/lumenal leaflet of membrane coupled to the hydrolysis of ATP. Thereby, participates in phospholipid transfer to apolipoproteins to form nascent high density lipoproteins/HDLs. Transports preferentially phosphatidylcholine over phosphatidylserine. May play a similar role in the efflux of intracellular cholesterol to apolipoproteins and the formation of nascent high density lipoproteins/HDLs. Translocates phospholipids from the outer face of the plasma membrane and forces it through its gateway and annulus into an elongated hydrophobic tunnel in its extracellular domain. This chain is Phospholipid-transporting ATPase ABCA1, found in Mus musculus (Mouse).